Here is a 93-residue protein sequence, read N- to C-terminus: Small ribosomal subunit protein uS19 (93 aa).

A disordered region spans residues 73 to 93; that stretch reads EFSPTRTYRGHDKKDKKIQKK.

This sequence belongs to the universal ribosomal protein uS19 family.

Functionally, protein S19 forms a complex with S13 that binds strongly to the 16S ribosomal RNA. This is Small ribosomal subunit protein uS19 from Phytoplasma mali (strain AT).